A 467-amino-acid chain; its full sequence is Putative serine/threonine-protein kinase R400 (467 aa).

The region spanning 99-467 (GVKLIYIKSG…STGQKPTKKV (369 aa)) is the Protein kinase domain. Residues 105–113 (IKSGTTGHT) and K129 contribute to the ATP site. The active-site Proton acceptor is D272. Residues 443-467 (LFQQGNGSKQPVPKKSTGQKPTKKV) form a disordered region. A compositionally biased stretch (polar residues) spans 458-467 (STGQKPTKKV).

The protein belongs to the protein kinase superfamily. Ser/Thr protein kinase family.

The protein localises to the virion. The catalysed reaction is L-seryl-[protein] + ATP = O-phospho-L-seryl-[protein] + ADP + H(+). The enzyme catalyses L-threonyl-[protein] + ATP = O-phospho-L-threonyl-[protein] + ADP + H(+). The polypeptide is Putative serine/threonine-protein kinase R400 (Acanthamoeba polyphaga mimivirus (APMV)).